We begin with the raw amino-acid sequence, 188 residues long: MATVGMNDVKNGMKILVNNEPAVITETEYVKPGKGQAFTRMKYRFIKSGRVVEMTMKATDDVEVADVVDTDMRYLYSDGEYWHFMDPDTFEQVQTDKAGMGGADKWLKGEEDCIVTLWNGTPIWVQPPNFVELKITETDPGVRGDTSGGGGKPATLETGAVVRVPLFVNQDEIIKVDTRSGEYSARVK.

N6-(3,6-diaminohexanoyl)-5-hydroxylysine is present on lysine 34.

It belongs to the elongation factor P family. May be beta-lysylated on the epsilon-amino group of Lys-34 by the combined action of EpmA and EpmB, and then hydroxylated on the C5 position of the same residue by EpmC (if this protein is present). Lysylation is critical for the stimulatory effect of EF-P on peptide-bond formation. The lysylation moiety may extend toward the peptidyltransferase center and stabilize the terminal 3-CCA end of the tRNA. Hydroxylation of the C5 position on Lys-34 may allow additional potential stabilizing hydrogen-bond interactions with the P-tRNA.

The protein resides in the cytoplasm. It functions in the pathway protein biosynthesis; polypeptide chain elongation. Its function is as follows. Involved in peptide bond synthesis. Alleviates ribosome stalling that occurs when 3 or more consecutive Pro residues or the sequence PPG is present in a protein, possibly by augmenting the peptidyl transferase activity of the ribosome. Modification of Lys-34 is required for alleviation. In Xanthomonas axonopodis pv. citri (strain 306), this protein is Elongation factor P.